We begin with the raw amino-acid sequence, 512 residues long: MEERKQKVVVVGAGPVGSLAALYAANRGHDVEIYELRGDLRDPSTTPLNFTRSINLALSERGLNAMRHANQPRLIDYVKGVTIPMRGRMIHGKRPDGKLYEEAQDYDIHGRSILAIDRGDLNKRLLDMLEEMPNVTFFFNHKLTGADFKRNKAWFENKDESTSNPRDRAREIEVDFDFMIGADGAHSAVRYHLMKFSRMDYQQEYIDTLWCEFQIAPSSSSAKSKFRISPNHLHIWPGKEFMFIAIPSNDGSFTCTLFAPAAIYEQLEEAGRTGDTSSSIPEFFDMHFPGVTSLIAPADLIAQFQTNPHLPLISIKCKPYHFSSSVVIVGDAAHAMVPFYGQGMNAGLEDVRILFDILDKHDRMTNDDSSLEASQRELALAEYSAVRVADAHAINDLALQNYIEMRSSVLSPVYRWRKALEEWLSVYVPSLGWQTKYSRVSFGNERYSEVVKKSERQGQVLLRSLVGGVGLPMLAGGLFLWFRYKGALGRAAYGVFYNCMGMVCRTIHGRRR.

This sequence belongs to the aromatic-ring hydroxylase family. KMO subfamily. Requires FAD as cofactor.

It is found in the mitochondrion outer membrane. It catalyses the reaction L-kynurenine + NADPH + O2 + H(+) = 3-hydroxy-L-kynurenine + NADP(+) + H2O. It participates in cofactor biosynthesis; NAD(+) biosynthesis; quinolinate from L-kynurenine: step 1/3. Catalyzes the hydroxylation of L-kynurenine (L-Kyn) to form 3-hydroxy-L-kynurenine (L-3OHKyn). Required for synthesis of quinolinic acid. This is Kynurenine 3-monooxygenase (nic-3) from Neurospora crassa (strain ATCC 24698 / 74-OR23-1A / CBS 708.71 / DSM 1257 / FGSC 987).